A 1136-amino-acid chain; its full sequence is Type I inositol polyphosphate 5-phosphatase 13 (1136 aa).

5 WD repeats span residues 147 to 185, 205 to 244, 259 to 297, 436 to 475, and 515 to 552; these read ETQTGRFLRNIACTETQLWAGQENGIRFWNLEDAYEAGC, VTTSPTMCLVADQSNKLLWSGHKDGKIRAWKMDQSSVSHD, AHRGPVNSIVISSYGDMWSCSEGGVIKIWPWDTLEKSLL, EDTRKTEAIVLAVDGTIWTGSISGLIVQWDGNGNRLRDVN, and SHNEPVIKLAAGGGFIFSLATHGGVRGWYVTSPGPLDN. Catalytic regions lie at residues 782-798 and 861-876; these read DMVAFFGDFNYRLFGIT and KKRIPAWCDRVIYRDT. Residue K940 forms a Glycyl lysine isopeptide (Lys-Gly) (interchain with G-Cter in ubiquitin) linkage. Positions 1104–1136 are disordered; it reads KNLGGSRRYPTDITRNGSTRPRTEDSVRRGKSR. Basic and acidic residues predominate over residues 1124-1136; sequence PRTEDSVRRGKSR.

It belongs to the inositol polyphosphate 5-phosphatase family. Interacts with KIN10, but not with PHOT1. Mg(2+) is required as a cofactor. As to expression, expressed in young seedlings and flowers. Highly expressed in anther and pollen grains, but not in pistils. Not detected in maturated roots, stems and rosette leaves.

Its subcellular location is the nucleus. It carries out the reaction 1D-myo-inositol 1,4,5-trisphosphate + H2O = 1D-myo-inositol 1,4-bisphosphate + phosphate. Converts inositol 1,4,5-trisphosphate (Ins(1,4,5)P3) to inositol 1,4-bisphosphate. Modulates cotyledon vein development through regulating auxin homeostasis. Involved in blue light responses. Decreases the amount of KIN10 degraded by the proteasome under low nutrient conditions. Participates with IP5P12 in the control of Ins(1,4,5)P3/Ca(2+) levels that is crucial for maintaining pollen dormancy and regulating early germination of pollen. May modulate auxin transport by regulating vesicle trafficking and thereby plays a role in root gravitropism. This is Type I inositol polyphosphate 5-phosphatase 13 from Arabidopsis thaliana (Mouse-ear cress).